The primary structure comprises 95 residues: Integration host factor subunit beta (95 aa).

The tract at residues 59–95 is disordered; that stretch reads RVGRNPKTGQSVRLDGKFVPHFKPGKELRDRVNEDES. The span at 72–95 shows a compositional bias: basic and acidic residues; it reads LDGKFVPHFKPGKELRDRVNEDES.

This sequence belongs to the bacterial histone-like protein family. As to quaternary structure, heterodimer of an alpha and a beta chain.

In terms of biological role, this protein is one of the two subunits of integration host factor, a specific DNA-binding protein that functions in genetic recombination as well as in transcriptional and translational control. The chain is Integration host factor subunit beta from Ectopseudomonas mendocina (strain ymp) (Pseudomonas mendocina).